A 362-amino-acid chain; its full sequence is Cobalt-precorrin-5B C(1)-methyltransferase (362 aa).

The protein belongs to the CbiD family.

It carries out the reaction Co-precorrin-5B + S-adenosyl-L-methionine = Co-precorrin-6A + S-adenosyl-L-homocysteine. It functions in the pathway cofactor biosynthesis; adenosylcobalamin biosynthesis; cob(II)yrinate a,c-diamide from sirohydrochlorin (anaerobic route): step 6/10. Functionally, catalyzes the methylation of C-1 in cobalt-precorrin-5B to form cobalt-precorrin-6A. The sequence is that of Cobalt-precorrin-5B C(1)-methyltransferase from Burkholderia cenocepacia (strain HI2424).